An 819-amino-acid polypeptide reads, in one-letter code: Plastid division protein CDP1, chloroplastic (819 aa).

Residues Met1–Val76 constitute a chloroplast transit peptide. Over Asp77–Gln572 the chain is Stromal. A coiled-coil region spans residues Glu419–Asn439. A helical membrane pass occupies residues Ser573–Leu593. Over Lys594–Lys819 the chain is Chloroplast intermembrane. Positions Ile762–Glu782 form a coiled coil.

In terms of assembly, self-interacts. Interacts (via N-terminus) with ARC3 (via MORN domains). Binds (via N-terminus) to FTSZ2 proteins, FTSZ2-1 and FTSZ2-2. Recruited ARC3 to the middle of the plastid where subsequent complex made of CDP1/PARC6, ARC3 and FtsZ proteins can form; this complex enhances the dynamics of Z rings during chloroplast division. Interacts (via C-terminus) with PDV1 (via C-terminus). Interacts with MIND1. Exclusively expressed in young green tissues such as young cotyledons, shoot apex, emerging leaves and budding inflorescence.

Its subcellular location is the plastid. The protein localises to the chloroplast inner membrane. Its function is as follows. Component of the plastid division machinery required for PDV1 localization to constriction sites. Involved in chloroplast division site placement. Required for the proper formation of FtsZ rings at the division site in nongreen plastids (e.g. etioplasts). Inhibits FtsZ assembly, functioning as an antagonistic regulator of FtsZ dynamics against ARC6, by recruiting ARC3 to the middle of the plastid to facilitate its interaction with FtsZ proteins. Required during stromule biogenesis in the leaf epidermis, especially in non-mesophyll cells plastids. This chain is Plastid division protein CDP1, chloroplastic, found in Arabidopsis thaliana (Mouse-ear cress).